We begin with the raw amino-acid sequence, 427 residues long: Serine hydroxymethyltransferase (427 aa).

Residues L118 and 122-124 (GHL) each bind (6S)-5,6,7,8-tetrahydrofolate. An N6-(pyridoxal phosphate)lysine modification is found at K227. 351–353 (SPF) is a (6S)-5,6,7,8-tetrahydrofolate binding site.

Belongs to the SHMT family. As to quaternary structure, homodimer. Requires pyridoxal 5'-phosphate as cofactor.

It is found in the cytoplasm. The catalysed reaction is (6R)-5,10-methylene-5,6,7,8-tetrahydrofolate + glycine + H2O = (6S)-5,6,7,8-tetrahydrofolate + L-serine. The protein operates within one-carbon metabolism; tetrahydrofolate interconversion. It participates in amino-acid biosynthesis; glycine biosynthesis; glycine from L-serine: step 1/1. Catalyzes the reversible interconversion of serine and glycine with tetrahydrofolate (THF) serving as the one-carbon carrier. This reaction serves as the major source of one-carbon groups required for the biosynthesis of purines, thymidylate, methionine, and other important biomolecules. Also exhibits THF-independent aldolase activity toward beta-hydroxyamino acids, producing glycine and aldehydes, via a retro-aldol mechanism. The chain is Serine hydroxymethyltransferase from Thermotoga petrophila (strain ATCC BAA-488 / DSM 13995 / JCM 10881 / RKU-1).